A 226-amino-acid polypeptide reads, in one-letter code: DNA mismatch repair protein MutH (226 aa).

The protein belongs to the MutH family.

It is found in the cytoplasm. Functionally, sequence-specific endonuclease that cleaves unmethylated GATC sequences. It is involved in DNA mismatch repair. The protein is DNA mismatch repair protein MutH of Vibrio campbellii (strain ATCC BAA-1116).